Consider the following 436-residue polypeptide: Serine--tRNA ligase (436 aa).

The span at Thr-43 to Val-55 shows a compositional bias: basic and acidic residues. Residues Thr-43–Asp-68 form a disordered region. Thr-237–Glu-239 contacts L-serine. Arg-268 to Glu-270 is an ATP binding site. Residue Glu-291 participates in L-serine binding. Residue Glu-355–Ser-358 participates in ATP binding. Ser-390 is an L-serine binding site.

It belongs to the class-II aminoacyl-tRNA synthetase family. Type-1 seryl-tRNA synthetase subfamily. Homodimer. The tRNA molecule binds across the dimer.

It localises to the cytoplasm. The enzyme catalyses tRNA(Ser) + L-serine + ATP = L-seryl-tRNA(Ser) + AMP + diphosphate + H(+). It carries out the reaction tRNA(Sec) + L-serine + ATP = L-seryl-tRNA(Sec) + AMP + diphosphate + H(+). It functions in the pathway aminoacyl-tRNA biosynthesis; selenocysteinyl-tRNA(Sec) biosynthesis; L-seryl-tRNA(Sec) from L-serine and tRNA(Sec): step 1/1. Catalyzes the attachment of serine to tRNA(Ser). Is also able to aminoacylate tRNA(Sec) with serine, to form the misacylated tRNA L-seryl-tRNA(Sec), which will be further converted into selenocysteinyl-tRNA(Sec). The polypeptide is Serine--tRNA ligase (Lactobacillus johnsonii (strain CNCM I-12250 / La1 / NCC 533)).